The chain runs to 205 residues: Putative 3-methyladenine DNA glycosylase (205 aa).

It belongs to the DNA glycosylase MPG family.

The chain is Putative 3-methyladenine DNA glycosylase from Bacillus cereus (strain ATCC 10987 / NRS 248).